The following is a 484-amino-acid chain: Glutathione reductase (484 aa).

FAD-binding residues include Ser-32 and Gly-33. Glutathione is bound at residue Ser-32. Glutathione is bound at residue Arg-39. FAD-binding residues include Glu-52, Thr-59, Cys-60, and Lys-68. An intrachain disulfide couples Cys-60 to Cys-65. Position 122 (Tyr-122) interacts with glutathione. Ala-138 is a binding site for FAD. NADP(+) contacts are provided by Ala-204, Ile-207, Glu-210, Arg-227, and Arg-233. Thr-242 lines the glutathione pocket. Gly-293 is an NADP(+) binding site. Residue Asp-333 coordinates FAD. Glu-339 lines the NADP(+) pocket. Thr-341 serves as a coordination point for FAD. Arg-349 provides a ligand contact to glutathione. Val-374 contributes to the NADP(+) binding site. Lys-426 lines the glutathione pocket. An FAD-binding site is contributed by His-473. His-473 functions as the Proton acceptor in the catalytic mechanism.

It belongs to the class-I pyridine nucleotide-disulfide oxidoreductase family. Homodimer. FAD is required as a cofactor.

It localises to the cytoplasm. The protein localises to the mitochondrion. The catalysed reaction is 2 glutathione + NADP(+) = glutathione disulfide + NADPH + H(+). Catalyzes the reduction of glutathione disulfide (GSSG) to reduced glutathione (GSH). Constitutes the major mechanism to maintain a high GSH:GSSG ratio in the cytosol. This chain is Glutathione reductase (GLR1), found in Kluyveromyces lactis (strain ATCC 8585 / CBS 2359 / DSM 70799 / NBRC 1267 / NRRL Y-1140 / WM37) (Yeast).